Consider the following 341-residue polypeptide: Solute carrier family 25 member 43 (341 aa).

Solcar repeat units lie at residues threonine 11–leucine 101, serine 105–tyrosine 185, and serine 200–asparagine 298. 6 helical membrane-spanning segments follow: residues leucine 16–alanine 36, leucine 68–alanine 88, isoleucine 110–isoleucine 130, glycine 166–methionine 186, phenylalanine 205–valine 225, and valine 262–valine 282.

Belongs to the mitochondrial carrier (TC 2.A.29) family.

Its subcellular location is the mitochondrion inner membrane. In Mus musculus (Mouse), this protein is Solute carrier family 25 member 43 (Slc25a43).